The chain runs to 187 residues: Pre-mRNA-splicing factor cwf7 (187 aa).

The protein belongs to the SPF27 family. As to quaternary structure, belongs to the 40S cdc5-associated complex (or cwf complex), a spliceosome sub-complex reminiscent of a late-stage spliceosome composed of the U2, U5 and U6 snRNAs and at least brr2, cdc5, cwf2/prp3, cwf3/syf1, cwf4/syf3, cwf5/ecm2, spp42/cwf6, cwf7/spf27, cwf8, cwf9, cwf10, cwf11, cwf12, prp45/cwf13, cwf14, cwf15, cwf16, cwf17, cwf18, cwf19, cwf20, cwf21, cwf22, cwf23, cwf24, cwf25, cwf26, cyp7/cwf27, cwf28, cwf29/ist3, lea1, msl1, prp5/cwf1, prp10, prp12/sap130, prp17, prp22, sap61, sap62, sap114, sap145, slu7, smb1, smd1, smd3, smf1, smg1 and syf2.

It is found in the nucleus. Functionally, involved in mRNA splicing. This Schizosaccharomyces pombe (strain 972 / ATCC 24843) (Fission yeast) protein is Pre-mRNA-splicing factor cwf7 (cwf7).